The chain runs to 377 residues: Succinyl-diaminopimelate desuccinylase (377 aa).

His66 contacts Zn(2+). Asp68 is an active-site residue. Asp99 contributes to the Zn(2+) binding site. The active-site Proton acceptor is Glu133. Positions 134, 162, and 348 each coordinate Zn(2+).

It belongs to the peptidase M20A family. DapE subfamily. Homodimer. Zn(2+) serves as cofactor. Requires Co(2+) as cofactor.

It carries out the reaction N-succinyl-(2S,6S)-2,6-diaminopimelate + H2O = (2S,6S)-2,6-diaminopimelate + succinate. Its pathway is amino-acid biosynthesis; L-lysine biosynthesis via DAP pathway; LL-2,6-diaminopimelate from (S)-tetrahydrodipicolinate (succinylase route): step 3/3. Its function is as follows. Catalyzes the hydrolysis of N-succinyl-L,L-diaminopimelic acid (SDAP), forming succinate and LL-2,6-diaminopimelate (DAP), an intermediate involved in the bacterial biosynthesis of lysine and meso-diaminopimelic acid, an essential component of bacterial cell walls. This Chromobacterium violaceum (strain ATCC 12472 / DSM 30191 / JCM 1249 / CCUG 213 / NBRC 12614 / NCIMB 9131 / NCTC 9757 / MK) protein is Succinyl-diaminopimelate desuccinylase.